We begin with the raw amino-acid sequence, 290 residues long: Glutamyl-Q tRNA(Asp) synthetase (290 aa).

L-glutamate is bound by residues 9–13 (RFAPS) and Glu45. Positions 12–22 (PSPSGSLHFGS) match the 'HIGH' region motif. Cys101, Cys103, Tyr115, and Cys119 together coordinate Zn(2+). Positions 170 and 188 each coordinate L-glutamate. Positions 226-230 (KLSKQ) match the 'KMSKS' region motif. Residue Lys229 coordinates ATP.

Belongs to the class-I aminoacyl-tRNA synthetase family. GluQ subfamily. The cofactor is Zn(2+).

In terms of biological role, catalyzes the tRNA-independent activation of glutamate in presence of ATP and the subsequent transfer of glutamate onto a tRNA(Asp). Glutamate is transferred on the 2-amino-5-(4,5-dihydroxy-2-cyclopenten-1-yl) moiety of the queuosine in the wobble position of the QUC anticodon. This Shewanella amazonensis (strain ATCC BAA-1098 / SB2B) protein is Glutamyl-Q tRNA(Asp) synthetase.